The chain runs to 399 residues: Carbamoyl phosphate synthase small chain (399 aa).

Residues 1 to 206 (MTQTIPSPKP…NKGYKTNNDA (206 aa)) are CPSase. L-glutamine is bound by residues S60, G258, and G260. One can recognise a Glutamine amidotransferase type-1 domain in the interval 210-398 (HIVAIDYGIK…FNLIMDYKKT (189 aa)). C287 acts as the Nucleophile in catalysis. Residues L288, Q291, N329, G331, and F332 each contribute to the L-glutamine site. Active-site residues include H371 and E373.

It belongs to the CarA family. In terms of assembly, composed of two chains; the small (or glutamine) chain promotes the hydrolysis of glutamine to ammonia, which is used by the large (or ammonia) chain to synthesize carbamoyl phosphate. Tetramer of heterodimers (alpha,beta)4.

It carries out the reaction hydrogencarbonate + L-glutamine + 2 ATP + H2O = carbamoyl phosphate + L-glutamate + 2 ADP + phosphate + 2 H(+). It catalyses the reaction L-glutamine + H2O = L-glutamate + NH4(+). The protein operates within amino-acid biosynthesis; L-arginine biosynthesis; carbamoyl phosphate from bicarbonate: step 1/1. It participates in pyrimidine metabolism; UMP biosynthesis via de novo pathway; (S)-dihydroorotate from bicarbonate: step 1/3. Functionally, small subunit of the glutamine-dependent carbamoyl phosphate synthetase (CPSase). CPSase catalyzes the formation of carbamoyl phosphate from the ammonia moiety of glutamine, carbonate, and phosphate donated by ATP, constituting the first step of 2 biosynthetic pathways, one leading to arginine and/or urea and the other to pyrimidine nucleotides. The small subunit (glutamine amidotransferase) binds and cleaves glutamine to supply the large subunit with the substrate ammonia. The sequence is that of Carbamoyl phosphate synthase small chain from Bartonella henselae (strain ATCC 49882 / DSM 28221 / CCUG 30454 / Houston 1) (Rochalimaea henselae).